A 422-amino-acid chain; its full sequence is 26S proteasome non-ATPase regulatory subunit 11 (422 aa).

A2 carries the N-acetylalanine modification. Residues S14 and S23 each carry the phosphoserine modification. The 169-residue stretch at 224-392 (DWKTAYSYFY…GVLIIFDEPP (169 aa)) folds into the PCI domain. K274 is covalently cross-linked (Glycyl lysine isopeptide (Lys-Gly) (interchain with G-Cter in SUMO2)).

It belongs to the proteasome subunit S9 family. Component of the 19S proteasome regulatory particle complex. The 26S proteasome consists of a 20S core particle (CP) and two 19S regulatory subunits (RP). The regulatory particle is made of a lid composed of 9 subunits including PSMD11, a base containing 6 ATPases and few additional components.

Functionally, component of the 26S proteasome, a multiprotein complex involved in the ATP-dependent degradation of ubiquitinated proteins. This complex plays a key role in the maintenance of protein homeostasis by removing misfolded or damaged proteins, which could impair cellular functions, and by removing proteins whose functions are no longer required. Therefore, the proteasome participates in numerous cellular processes, including cell cycle progression, apoptosis, or DNA damage repair. In the complex, PSMD11 is required for proteasome assembly. Plays a key role in increased proteasome activity in embryonic stem cells (ESCs): its high expression in ESCs promotes enhanced assembly of the 26S proteasome, followed by higher proteasome activity. The protein is 26S proteasome non-ATPase regulatory subunit 11 (Psmd11) of Mus musculus (Mouse).